Here is an 87-residue protein sequence, read N- to C-terminus: MPRLVLVSFLFLAIFSVFIGGFAKSKCPRNEIFTRCHAACQPSCARLARKPFCIKICKPGCICTSGYLRNKNNVCVPRSRCFSGRLL.

The first 23 residues, 1 to 23 (MPRLVLVSFLFLAIFSVFIGGFA), serve as a signal peptide directing secretion. Cystine bridges form between Cys-27–Cys-61, Cys-36–Cys-57, Cys-40–Cys-53, Cys-44–Cys-81, and Cys-63–Cys-75. One can recognise a TIL domain in the interval 27 to 81 (CPRNEIFTRCHAACQPSCARLARKPFCIKICKPGCICTSGYLRNKNNVCVPRSRC).

This sequence belongs to the serine protease inhibitor-like (TIL domain-containing) family. In terms of tissue distribution, specifically expressed by the venom gland.

Its subcellular location is the secreted. Antifibrinolytic and antimicrobial serine protease inhibitor. Inhibits trypsin, plasmin and microbial serine proteases but not chymotrypsin, thrombin and elastase. Inhibits the plasmin-mediated degradation of fibrin to fibrin degradation products. Also binds to bacterial and fungal surfaces and exhibits antimicrobial activity against fungi as well as Gram-positive and Gram-negative bacteria. The protein is Venom serine protease inhibitor of Apis cerana (Indian honeybee).